A 139-amino-acid chain; its full sequence is GATA transcription factor 16 (139 aa).

The GATA-type zinc-finger motif lies at 32-86; it reads NDKKKTCADCGTSKTPLWRGGPVGPKSLCNACGIRNRKKRRGGTEDNKKLKKSSS. The tract at residues 67 to 98 is disordered; the sequence is NRKKRRGGTEDNKKLKKSSSGGGNRKFGESLK.

It belongs to the type IV zinc-finger family. Class B subfamily.

Its subcellular location is the nucleus. Functionally, transcriptional regulator that specifically binds 5'-GATA-3' or 5'-GAT-3' motifs within gene promoters. This Arabidopsis thaliana (Mouse-ear cress) protein is GATA transcription factor 16 (GATA16).